A 317-amino-acid chain; its full sequence is Cyclin-dependent kinase 1 (317 aa).

The region spanning 7–292 (YQRQEKVGEG…AKRALIHPYF (286 aa)) is the Protein kinase domain. ATP is bound by residues 13-21 (VGEGTYGVV) and Lys-37. Thr-17 is modified (phosphothreonine). Position 18 is a phosphotyrosine; by SWE1 (Tyr-18). Catalysis depends on Asp-133, which acts as the Proton acceptor. The residue at position 166 (Thr-166) is a Phosphothreonine; by CAK. The disordered stretch occupies residues 296–317 (DDRDHNNYNEDNIGIDKHQNMQ).

It belongs to the protein kinase superfamily. CMGC Ser/Thr protein kinase family. CDC2/CDKX subfamily. As to quaternary structure, forms several complexes with cyclins CCN1, CLB2, CLN3, and HGC1. The CDC28-CCN1 complex associates with septin CDC11 upon hyphal induction. Interacts with IQG1, RFA2, and HSP90. In terms of processing, phosphorylated at Tyr-18 by SWE1 in a cell cycle-dependent manner. Yeast-form and hyphal cells display similar dynamics of phosphorylation and dephosphorylation of Tyr-18. Tyr-18 phosphorylation leads to inhibition of CDC28 kinase activity.

The enzyme catalyses L-seryl-[protein] + ATP = O-phospho-L-seryl-[protein] + ADP + H(+). It catalyses the reaction L-threonyl-[protein] + ATP = O-phospho-L-threonyl-[protein] + ADP + H(+). Phosphorylation at Thr-17 or Tyr-18 inactivates the enzyme, while phosphorylation at Thr-166 activates it. Cyclin-dependent kinase that acts as a master regulator of the mitotic and meiotic cell cycles. May drive the G1-S transition. Plays a role in mitotic exit. Plays a role in the expression of morphology-related transcription factors, and especially hyphae-specific genes. Binds distinct cyclin subunits as cells progress through the division cycle or flamentous growth. The CDC28-CLB2 complex regulates cytokinesis partly by phosphorylating the actomyosin ring component IQG1. The CDC28-CLN3 complex phosphorylates SLA1 which regulates cortical actin patch dynamics. The CDC28-CCN1 complex phosphorylates CDC11 and SEC2 upon induction of filamentous growth. The CDC28-HGC1 complex also phosphorylates SEC2 and maintains CDC11 phosphorylation throughout hyphal growth. Moreover, the CDC28-HGC1 complex phosphorylates and prevents RGA2 from localizing to hyphal tips, leading to localized CDC42 activation for hyphal extension. CDC28-HGC1 phosphorylation of EFG1 represses cell separation genes during hyphal growth. Additional substrates for CDC28 are RFA2 in G1-phase; MOB2, which is required for the maintenance of polarisome components and for inhibition of cell separation in hyphae; and GIN4 to regulate its association to SEP7 and subsequent septin ring assembly. The sequence is that of Cyclin-dependent kinase 1 from Candida albicans (strain SC5314 / ATCC MYA-2876) (Yeast).